A 350-amino-acid chain; its full sequence is Heat-inducible transcription repressor HrcA (350 aa).

Belongs to the HrcA family.

Its function is as follows. Negative regulator of class I heat shock genes (grpE-dnaK-dnaJ and groELS operons). Prevents heat-shock induction of these operons. The polypeptide is Heat-inducible transcription repressor HrcA (Xanthomonas campestris pv. campestris (strain ATCC 33913 / DSM 3586 / NCPPB 528 / LMG 568 / P 25)).